A 690-amino-acid polypeptide reads, in one-letter code: Elongation factor G (690 aa).

The region spanning 8-283 (EDYRNFGIMA…AVVDYLPSPV (276 aa)) is the tr-type G domain. GTP is bound by residues 17–24 (AHIDAGKT), 81–85 (DTPGH), and 135–138 (NKMD).

It belongs to the TRAFAC class translation factor GTPase superfamily. Classic translation factor GTPase family. EF-G/EF-2 subfamily.

The protein resides in the cytoplasm. Catalyzes the GTP-dependent ribosomal translocation step during translation elongation. During this step, the ribosome changes from the pre-translocational (PRE) to the post-translocational (POST) state as the newly formed A-site-bound peptidyl-tRNA and P-site-bound deacylated tRNA move to the P and E sites, respectively. Catalyzes the coordinated movement of the two tRNA molecules, the mRNA and conformational changes in the ribosome. The polypeptide is Elongation factor G (Rhodopseudomonas palustris (strain BisB18)).